Consider the following 155-residue polypeptide: Ribosome maturation factor RimP (155 aa).

This sequence belongs to the RimP family.

Its subcellular location is the cytoplasm. Required for maturation of 30S ribosomal subunits. The sequence is that of Ribosome maturation factor RimP from Staphylococcus aureus (strain JH9).